The chain runs to 213 residues: Phosphatidylserine decarboxylase proenzyme (213 aa).

Serine 182 functions as the Schiff-base intermediate with substrate; via pyruvic acid in the catalytic mechanism. Serine 182 is modified (pyruvic acid (Ser); by autocatalysis).

Belongs to the phosphatidylserine decarboxylase family. PSD-A subfamily. Heterodimer of a large membrane-associated beta subunit and a small pyruvoyl-containing alpha subunit. The cofactor is pyruvate. In terms of processing, is synthesized initially as an inactive proenzyme. Formation of the active enzyme involves a self-maturation process in which the active site pyruvoyl group is generated from an internal serine residue via an autocatalytic post-translational modification. Two non-identical subunits are generated from the proenzyme in this reaction, and the pyruvate is formed at the N-terminus of the alpha chain, which is derived from the carboxyl end of the proenzyme. The post-translation cleavage follows an unusual pathway, termed non-hydrolytic serinolysis, in which the side chain hydroxyl group of the serine supplies its oxygen atom to form the C-terminus of the beta chain, while the remainder of the serine residue undergoes an oxidative deamination to produce ammonia and the pyruvoyl prosthetic group on the alpha chain.

The protein resides in the cell membrane. It carries out the reaction a 1,2-diacyl-sn-glycero-3-phospho-L-serine + H(+) = a 1,2-diacyl-sn-glycero-3-phosphoethanolamine + CO2. The protein operates within phospholipid metabolism; phosphatidylethanolamine biosynthesis; phosphatidylethanolamine from CDP-diacylglycerol: step 2/2. Catalyzes the formation of phosphatidylethanolamine (PtdEtn) from phosphatidylserine (PtdSer). The protein is Phosphatidylserine decarboxylase proenzyme of Geotalea daltonii (strain DSM 22248 / JCM 15807 / FRC-32) (Geobacter daltonii).